Consider the following 240-residue polypeptide: Large ribosomal subunit protein uL2 (240 aa).

The segment covering 1-11 (MGKRLISQNRG) has biased composition (polar residues). 2 disordered regions span residues 1–26 (MGKR…KRKG) and 206–240 (GGGR…TGRK). Composition is skewed to basic residues over residues 13-26 (GTPK…KRKG) and 228-240 (KVGH…TGRK).

Belongs to the universal ribosomal protein uL2 family. As to quaternary structure, part of the 50S ribosomal subunit. Forms a bridge to the 30S subunit in the 70S ribosome.

In terms of biological role, one of the primary rRNA binding proteins. Required for association of the 30S and 50S subunits to form the 70S ribosome, for tRNA binding and peptide bond formation. It has been suggested to have peptidyltransferase activity; this is somewhat controversial. Makes several contacts with the 16S rRNA in the 70S ribosome. The polypeptide is Large ribosomal subunit protein uL2 (Methanococcus vannielii (strain ATCC 35089 / DSM 1224 / JCM 13029 / OCM 148 / SB)).